The sequence spans 395 residues: Vascular endothelial growth factor A, long form (395 aa).

Disordered stretches follow at residues 1–45 (MTDR…VEGV) and 73–175 (EAEP…AGPG). Residues 73–85 (EAEPSGAARSASS) show a composition bias toward low complexity. A compositionally biased stretch (acidic residues) spans 91-102 (QPEEGEEEEEKE). Composition is skewed to low complexity over residues 123–143 (AAVCADSAPAARAPQALARAS) and 165–175 (RRGSASRAGPG). Cystine bridges form between Cys-232–Cys-274, Cys-263–Cys-308, and Cys-267–Cys-310. Asn-281 carries N-linked (GlcNAc...) asparagine glycosylation. Residues 314-323 (KDRARQEKKS) are compositionally biased toward basic and acidic residues. A disordered region spans residues 314–344 (KDRARQEKKSVRGKGKGQKRKRKKSRYKSWS). The span at 324-340 (VRGKGKGQKRKRKKSRY) shows a compositional bias: basic residues.

Belongs to the PDGF/VEGF growth factor family. In terms of assembly, homodimer; disulfide-linked. Also found as heterodimer with PGF. Interacts with NRP1. Interacts with isoform 2 of BSG. Interacts with CD82; this interaction inhibits VEGFA-mediated signaling pathway. Post-translationally, produced by use of an alternative upstream CUG codon and post-translationally processed into the N-terminal N-VEGF form and the C-terminal secreted VEGFA form. As to expression, higher expression in pituitary tumors than the pituitary gland. In terms of tissue distribution, widely expressed. Not widely expressed.

Its subcellular location is the cytoplasm. It is found in the nucleus. It localises to the secreted. The protein localises to the endoplasmic reticulum. The protein resides in the golgi apparatus. Its subcellular location is the extracellular space. It is found in the extracellular matrix. Its function is as follows. Participates in the induction of key genes involved in the response to hypoxia and in the induction of angiogenesis such as HIF1A. Involved in protecting cells from hypoxia-mediated cell death. In terms of biological role, growth factor active in angiogenesis, vasculogenesis and endothelial cell growth. Induces endothelial cell proliferation, promotes cell migration, inhibits apoptosis and induces permeabilization of blood vessels. Binds to the FLT1/VEGFR1 and KDR/VEGFR2 receptors, heparan sulfate and heparin. Binds to the NRP1/neuropilin-1 receptor. Binding to NRP1 initiates a signaling pathway needed for motor neuron axon guidance and cell body migration, including for the caudal migration of facial motor neurons from rhombomere 4 to rhombomere 6 during embryonic development. Also binds the DEAR/FBXW7-AS1 receptor. Binds to the KDR receptor but does not activate downstream signaling pathways, does not activate angiogenesis and inhibits tumor growth. The sequence is that of Vascular endothelial growth factor A, long form (VEGFA) from Homo sapiens (Human).